A 601-amino-acid chain; its full sequence is UvrABC system protein C (601 aa).

The 80-residue stretch at 15–94 (LQPGVYLFKN…IKSYKPRYNI (80 aa)) folds into the GIY-YIG domain. Residues 202-237 (QEIVREKEKEMAMAARSLEFEKAARLRDQIQSLRQL) enclose the UVR domain.

Belongs to the UvrC family. As to quaternary structure, interacts with UvrB in an incision complex.

It is found in the cytoplasm. Functionally, the UvrABC repair system catalyzes the recognition and processing of DNA lesions. UvrC both incises the 5' and 3' sides of the lesion. The N-terminal half is responsible for the 3' incision and the C-terminal half is responsible for the 5' incision. In Syntrophomonas wolfei subsp. wolfei (strain DSM 2245B / Goettingen), this protein is UvrABC system protein C.